We begin with the raw amino-acid sequence, 315 residues long: Small ribosomal subunit biogenesis GTPase RsgA (315 aa).

The region spanning 80–241 (LSKQTHIIAS…IIDTPGIKGF (162 aa)) is the CP-type G domain. Residues 129–132 (NKVD) and 183–191 (GHSGTGKST) contribute to the GTP site. Residues Cys265, Cys270, His272, and Cys278 each coordinate Zn(2+).

Belongs to the TRAFAC class YlqF/YawG GTPase family. RsgA subfamily. As to quaternary structure, monomer. Associates with 30S ribosomal subunit, binds 16S rRNA. Zn(2+) is required as a cofactor.

It localises to the cytoplasm. Its function is as follows. One of several proteins that assist in the late maturation steps of the functional core of the 30S ribosomal subunit. Helps release RbfA from mature subunits. May play a role in the assembly of ribosomal proteins into the subunit. Circularly permuted GTPase that catalyzes slow GTP hydrolysis, GTPase activity is stimulated by the 30S ribosomal subunit. This chain is Small ribosomal subunit biogenesis GTPase RsgA, found in Christiangramia forsetii (strain DSM 17595 / CGMCC 1.15422 / KT0803) (Gramella forsetii).